The following is a 522-amino-acid chain: Zinc finger protein 892 (522 aa).

Disordered stretches follow at residues 1-22 (MEPEGRGSLFEDSDLLHAGNPK) and 96-124 (AASQKHWETIPESKELTPEKDISEEESAP). The span at 100–116 (KHWETIPESKELTPEKD) shows a compositional bias: basic and acidic residues. C2H2-type zinc fingers lie at residues 221–243 (WKCNECEKAFSYYSAFVLHQRIH), 249–271 (YECNECGKAFSQSIHLTLHQRIH), 277–299 (YECHECGKAFSHRSALIRHHIIH), 305–327 (YECNECGKAFNQSSYLTQHQRIH), 333–355 (YECNECGKAFSQSTFLTQHQVIH), 361–383 (YKCNECGKAFSDRSGLIQHQRTH), 389–411 (YECNECGKAFGYCSALTQHQRTH), 417–439 (YKCNDCAKAFSDRSALIRHQRTH), 445–467 (YKCKDCGKAFSQSSSLTKHQKTH), and 473–495 (YKCKECGKAFSQSSSLSQHQKTH).

Belongs to the krueppel C2H2-type zinc-finger protein family.

Its subcellular location is the nucleus. Its function is as follows. May be involved in transcriptional regulation. The protein is Zinc finger protein 892 of Homo sapiens (Human).